Reading from the N-terminus, the 58-residue chain is Small ribosomal subunit protein bS21 (58 aa).

Residues 39 to 58 (DKPSVKKRAKSKAAAKYRSR) are disordered. Positions 43 to 58 (VKKRAKSKAAAKYRSR) are enriched in basic residues.

Belongs to the bacterial ribosomal protein bS21 family.

This is Small ribosomal subunit protein bS21 from Chlamydia abortus (strain DSM 27085 / S26/3) (Chlamydophila abortus).